The primary structure comprises 83 residues: Cytochrome c oxidase subunit 12, mitochondrial (83 aa).

Residues 24 to 67 (TKHCWQSYVDYHKCVNMKGEDFAPCKVFWKTYNALCPLDWIEKW) form the CHCH domain. The short motif at 27-37 (CWQSYVDYHKC) is the Cx9C motif element. Cystine bridges form between C27–C59 and C37–C48. The Cx10C motif motif lies at 48-59 (CKVFWKTYNALC). Residue S82 is modified to Phosphoserine.

The protein belongs to the cytochrome c oxidase subunit 6B family. In terms of assembly, component of the cytochrome c oxidase (complex IV, CIV), a multisubunit enzyme composed of 12 subunits. The complex is composed of a catalytic core of 3 subunits COX1, COX2 and COX3, encoded in the mitochondrial DNA, and 9 supernumerary subunits COX4, COX5A (or COX5B), COX6, COX7, COX8, COX9, COX12, COX13 and COX26, which are encoded in the nuclear genome. The complex exists as a monomer or a dimer and forms supercomplexes (SCs) in the inner mitochondrial membrane with a dimer of ubiquinol-cytochrome c oxidoreductase (cytochrome b-c1 complex, complex III, CIII), resulting in 2 different assemblies (supercomplexes III(2)IV and III(2)IV(2)).

It is found in the mitochondrion inner membrane. The protein operates within energy metabolism; oxidative phosphorylation. Its function is as follows. Component of the cytochrome c oxidase, the last enzyme in the mitochondrial electron transport chain which drives oxidative phosphorylation. The respiratory chain contains 3 multisubunit complexes succinate dehydrogenase (complex II, CII), ubiquinol-cytochrome c oxidoreductase (cytochrome b-c1 complex, complex III, CIII) and cytochrome c oxidase (complex IV, CIV), that cooperate to transfer electrons derived from NADH and succinate to molecular oxygen, creating an electrochemical gradient over the inner membrane that drives transmembrane transport and the ATP synthase. Cytochrome c oxidase is the component of the respiratory chain that catalyzes the reduction of oxygen to water. Electrons originating from reduced cytochrome c in the intermembrane space (IMS) are transferred via the dinuclear copper A center (CU(A)) of COX2 and heme A of COX1 to the active site in COX1, a binuclear center (BNC) formed by heme A3 and copper B (CU(B)). The BNC reduces molecular oxygen to 2 water molecules unsing 4 electrons from cytochrome c in the IMS and 4 protons from the mitochondrial matrix. This chain is Cytochrome c oxidase subunit 12, mitochondrial (COX12), found in Saccharomyces cerevisiae (strain ATCC 204508 / S288c) (Baker's yeast).